The following is a 75-amino-acid chain: Dermaseptin-DA2 (75 aa).

The signal sequence occupies residues 1 to 22 (MALVKKSLFLVLFLGLVSLSIC). The propeptide occupies 23 to 42 (EEKRENEDEEEQEDDEQSEE).

This sequence belongs to the frog skin active peptide (FSAP) family. Dermaseptin subfamily. As to expression, expressed by the skin glands.

It localises to the secreted. Possesses a potent antimicrobial activity against Gram-positive and Gram-negative bacteria. Probably acts by disturbing membrane functions with its amphipathic structure. The sequence is that of Dermaseptin-DA2 from Agalychnis dacnicolor (Giant Mexican leaf frog).